A 389-amino-acid polypeptide reads, in one-letter code: Phospho-N-acetylmuramoyl-pentapeptide-transferase (389 aa).

Transmembrane regions (helical) follow at residues 25 to 45 (RAVM…PWVI), 73 to 93 (TMGG…WADL), 97 to 117 (FIWI…VDDY), 135 to 155 (FWQT…VSEI), 190 to 210 (VSYP…IVGS), 222 to 242 (GLVI…AYVM), 258 to 278 (GAGE…AFLW), 286 to 306 (VFMG…IAVI), 311 to 331 (IVLF…MMQV), and 366 to 386 (QVVV…LSSL).

The protein belongs to the glycosyltransferase 4 family. MraY subfamily. Requires Mg(2+) as cofactor.

The protein localises to the cell inner membrane. The enzyme catalyses UDP-N-acetyl-alpha-D-muramoyl-L-alanyl-gamma-D-glutamyl-meso-2,6-diaminopimeloyl-D-alanyl-D-alanine + di-trans,octa-cis-undecaprenyl phosphate = di-trans,octa-cis-undecaprenyl diphospho-N-acetyl-alpha-D-muramoyl-L-alanyl-D-glutamyl-meso-2,6-diaminopimeloyl-D-alanyl-D-alanine + UMP. Its pathway is cell wall biogenesis; peptidoglycan biosynthesis. Catalyzes the initial step of the lipid cycle reactions in the biosynthesis of the cell wall peptidoglycan: transfers peptidoglycan precursor phospho-MurNAc-pentapeptide from UDP-MurNAc-pentapeptide onto the lipid carrier undecaprenyl phosphate, yielding undecaprenyl-pyrophosphoryl-MurNAc-pentapeptide, known as lipid I. In Polynucleobacter asymbioticus (strain DSM 18221 / CIP 109841 / QLW-P1DMWA-1) (Polynucleobacter necessarius subsp. asymbioticus), this protein is Phospho-N-acetylmuramoyl-pentapeptide-transferase.